The chain runs to 272 residues: Glutamate racemase (272 aa).

Substrate-binding positions include 10 to 11 (DS) and 42 to 43 (YG). Cysteine 73 serves as the catalytic Proton donor/acceptor. 74-75 (NT) serves as a coordination point for substrate. The active-site Proton donor/acceptor is the cysteine 183. 184-185 (TH) is a substrate binding site.

The protein belongs to the aspartate/glutamate racemases family.

It catalyses the reaction L-glutamate = D-glutamate. It participates in cell wall biogenesis; peptidoglycan biosynthesis. Its function is as follows. Provides the (R)-glutamate required for cell wall biosynthesis. The protein is Glutamate racemase of Leifsonia xyli subsp. xyli (strain CTCB07).